An 85-amino-acid polypeptide reads, in one-letter code: F1845 adhesin operon regulatory protein (85 aa).

Functionally, regulates the transcription of genes involved in the biosynthesis of F1845 fimbrial adhesin. In Escherichia coli, this protein is F1845 adhesin operon regulatory protein (daaA).